The primary structure comprises 765 residues: Dipeptidyl peptidase 4 (765 aa).

Residues 1–6 (MKTPWK) are Cytoplasmic-facing. The chain crosses the membrane as a helical; Signal-anchor for type II membrane protein span at residues 7–29 (VLLGLLAIAALVTVITVPVVLLT). The Extracellular segment spans residues 30 to 765 (KGNDASTDSR…HFLKQCFSLL (736 aa)). Residues N84, N91, N149, N218, N228, N271, N280, N320, and N392 are each glycosylated (N-linked (GlcNAc...) asparagine). 3 disulfide bridges follow: C384–C393, C443–C446, and C453–C471. Residue N495 is glycosylated (N-linked (GlcNAc...) asparagine). Residue S629 is the Charge relay system of the active site. An intrachain disulfide couples C648 to C761. N-linked (GlcNAc...) asparagine glycosylation is present at N684. Residues D707 and H739 each act as charge relay system in the active site.

Belongs to the peptidase S9B family. DPPIV subfamily. Monomer. Homodimer. Heterodimer with Seprase (FAP). Requires homodimerization for optimal dipeptidyl peptidase activity and T-cell costimulation. Found in a membrane raft complex, at least composed of BCL10, CARD11, DPP4 and IKBKB. Associates with collagen. Interacts with PTPRC; the interaction is enhanced in an interleukin-12-dependent manner in activated lymphocytes. Interacts (via extracellular domain) with ADA; does not inhibit its dipeptidyl peptidase activity. Interacts with CAV1 (via the N-terminus); the interaction is direct. Interacts (via cytoplasmic tail) with CARD11 (via PDZ domain); its homodimerization is necessary for interaction with CARD11. Interacts with IGF2R; the interaction is direct. Interacts with GPC3. The soluble form (Dipeptidyl peptidase 4 soluble form also named SDPP) derives from the membrane form (Dipeptidyl peptidase 4 membrane form also named MDPP) by proteolytic processing. Post-translationally, N- and O-Glycosylated. In terms of processing, phosphorylated. Mannose 6-phosphate residues in the carbohydrate moiety are necessary for interaction with IGF2R in activated T-cells. Mannose 6-phosphorylation is induced during T-cell activation. As to expression, intestinal epithelium, dendritic cells and several immune system tissues.

Its subcellular location is the secreted. It localises to the cell membrane. It is found in the apical cell membrane. The protein localises to the cell projection. The protein resides in the invadopodium membrane. Its subcellular location is the lamellipodium membrane. It localises to the cell junction. It is found in the membrane raft. It catalyses the reaction Release of an N-terminal dipeptide, Xaa-Yaa-|-Zaa-, from a polypeptide, preferentially when Yaa is Pro, provided Zaa is neither Pro nor hydroxyproline.. Inhibited by GPC3 and diprotin A. Functionally, cell surface glycoprotein receptor involved in the costimulatory signal essential for T-cell receptor (TCR)-mediated T-cell activation. Acts as a positive regulator of T-cell coactivation, by binding at least ADA, CAV1, IGF2R, and PTPRC. Its binding to CAV1 and CARD11 induces T-cell proliferation and NF-kappa-B activation in a T-cell receptor/CD3-dependent manner. Its interaction with ADA also regulates lymphocyte-epithelial cell adhesion. In association with FAP is involved in the pericellular proteolysis of the extracellular matrix (ECM), the migration and invasion of endothelial cells into the ECM. May be involved in the promotion of lymphatic endothelial cells adhesion, migration and tube formation. When overexpressed, enhanced cell proliferation, a process inhibited by GPC3. Also acts as a serine exopeptidase with a dipeptidyl peptidase activity that regulates various physiological processes by cleaving peptides in the circulation, including many chemokines, mitogenic growth factors, neuropeptides and peptide hormones. Removes N-terminal dipeptides sequentially from polypeptides having unsubstituted N-termini provided that the penultimate residue is proline. The protein is Dipeptidyl peptidase 4 (DPP4) of Bos taurus (Bovine).